The following is an 89-amino-acid chain: Alpha-ketoglutarate dehydrogenase subunit 4, mitochondrial (89 aa).

The protein belongs to the alpha-ketoglutarate dehydrogenase component 4 family. In terms of assembly, component of the 2-oxoglutarate dehydrogenase complex (OGDC), also called alpha-ketoglutarate dehydrogenase (KGDH) complex. The copmplex is composed of the catalytic subunits OGDH (2-oxoglutarate dehydrogenase kgd1; also called E1 subunit), DLST (dihydrolipoamide succinyltransferase kgd2; also called E2 subunit) and DLD (dihydrolipoamide dehydrogenase dld1; also called E3 subunit), and the assembly factor KGD4. Within OGDC, interacts (via N-terminus) with E3 subunit and (via C-terminus) with the complex core formed by E1 and E2 subunits.

Its subcellular location is the mitochondrion. Functionally, molecular adapter that is necessary to a form a stable 2-oxoglutarate dehydrogenase enzyme complex (OGDC). Required for incorporation of the E3 subunit (dld1) into the E1-E2 core (kgd1-kgd2) of mitochondrial OGDC, and acting as a stability factor for the fully assembled complex. In Schizosaccharomyces pombe (strain 972 / ATCC 24843) (Fission yeast), this protein is Alpha-ketoglutarate dehydrogenase subunit 4, mitochondrial (kgd4).